The sequence spans 155 residues: Small ribosomal subunit protein bS6 (155 aa).

Residues 94–155 are disordered; it reads EKHEEGPSAM…RPRRPREDRV (62 aa).

It belongs to the bacterial ribosomal protein bS6 family.

Binds together with bS18 to 16S ribosomal RNA. This chain is Small ribosomal subunit protein bS6, found in Rhizobium johnstonii (strain DSM 114642 / LMG 32736 / 3841) (Rhizobium leguminosarum bv. viciae).